We begin with the raw amino-acid sequence, 476 residues long: Stromelysin-2 (476 aa).

A signal peptide spans 1–17; it reads MEPLAILALLSLPICSA. A propeptide spans 18 to 99 (activation peptide); sequence YPLHGAVTQG…PRCGVPDVGG (82 aa). The Cysteine switch motif lies at 90-97; that stretch reads PRCGVPDV. Residues cysteine 92, histidine 168, aspartate 170, histidine 183, histidine 196, and histidine 218 each contribute to the Zn(2+) site. Residue glutamate 219 is part of the active site. Residues histidine 222 and histidine 228 each contribute to the Zn(2+) site. Hemopexin repeat units lie at residues 286 to 335, 336 to 382, 384 to 432, and 433 to 476; these read PDKC…WPTL, PSDL…GFPP, VKKI…FPGI, and EPQV…WLLC. Cysteine 289 and cysteine 476 are joined by a disulfide.

This sequence belongs to the peptidase M10A family. The cofactor is Zn(2+). Requires Ca(2+) as cofactor. As to expression, expressed in small intestine. Weak levels in heart and lung.

The protein localises to the secreted. Its subcellular location is the extracellular space. It is found in the extracellular matrix. The enzyme catalyses Similar to stromelysin 1, but action on collagen types III, IV and V is weak.. Its function is as follows. Can degrade fibronectin, gelatins of type I, III, IV, and V; weakly collagens III, IV, and V. Activates procollagenase. The sequence is that of Stromelysin-2 (Mmp10) from Mus musculus (Mouse).